Consider the following 508-residue polypeptide: Tyrosine decarboxylase 4 (508 aa).

Position 318 is an N6-(pyridoxal phosphate)lysine (Lys318).

It belongs to the group II decarboxylase family. Homodimer. Pyridoxal 5'-phosphate serves as cofactor.

It catalyses the reaction L-tyrosine + H(+) = tyramine + CO2. The polypeptide is Tyrosine decarboxylase 4 (TYRDC-4) (Petroselinum crispum (Parsley)).